Here is a 129-residue protein sequence, read N- to C-terminus: HTH-type transcriptional regulator DdrOP3 (129 aa).

In terms of domain architecture, HTH cro/C1-type spans 7-61 (LRELRQERGLRLKDIAGAAQISVPYLSDLERGRTNPSLETLQSLASTYGITVHDL). A DNA-binding region (H-T-H motif) is located at residues 18 to 37 (LKDIAGAAQISVPYLSDLER).

Post-translationally, cleaved between Leu-106 and Arg-107 by the IrrE metalloprotease after exposure to radiation. Cleavage inactivates DdrOP3, leading to derepression of the target genes.

Functionally, repressor specific for genes preceded by a radiation/desiccation response motif (RDRM) site, which is present upstream of several radiation-induced genes. This Deinococcus deserti (strain DSM 17065 / CIP 109153 / LMG 22923 / VCD115) protein is HTH-type transcriptional regulator DdrOP3.